The sequence spans 420 residues: Transcriptional adapter 2-beta (420 aa).

A ZZ-type zinc finger spans residues 4 to 59 (LSKKYCVYCLADVTSLRLRCTECQDIELCTDCFSAGAEIGNHRRWHGYQLVDGGRF). Zn(2+) is bound by residues C9, C12, C23, C26, C32, C35, H45, and H49. In terms of domain architecture, SANT spans 65–118 (EAEGGWTSREEQLLLDAIEQFGFGNWEDMAAHVGASRTPTEVMEHYVTMYIHGN). The disordered stretch occupies residues 303–333 (EESAEYEAARHKREKRKENKNIANSKRGRED).

It is found in the nucleus. In terms of biological role, transcriptional coactivator. This is Transcriptional adapter 2-beta (tada2b) from Xenopus laevis (African clawed frog).